The primary structure comprises 252 residues: Isoprenyl transferase (252 aa).

Residue Asp32 is part of the active site. Mg(2+) is bound at residue Asp32. Residues 33–36 (GNGR), Trp37, Arg45, His49, and 77–79 (STE) each bind substrate. Asn80 serves as the catalytic Proton acceptor. Substrate-binding positions include Trp81, Arg83, Arg200, and 206–208 (RLS). Glu219 provides a ligand contact to Mg(2+).

This sequence belongs to the UPP synthase family. In terms of assembly, homodimer. Requires Mg(2+) as cofactor.

In terms of biological role, catalyzes the condensation of isopentenyl diphosphate (IPP) with allylic pyrophosphates generating different type of terpenoids. This chain is Isoprenyl transferase, found in Listeria innocua serovar 6a (strain ATCC BAA-680 / CLIP 11262).